An 828-amino-acid chain; its full sequence is Translation initiation factor IF-2 (828 aa).

2 disordered regions span residues 48-76 (SYSG…SEEF) and 112-137 (ASQE…EPKI). Residues 49-58 (YSGSTTTLSL) are compositionally biased toward polar residues. Over residues 65–74 (LETGSSSGSE) the composition is skewed to low complexity. The span at 116–126 (DPIEVEQEESS) shows a compositional bias: acidic residues. The span at 127–137 (DTNKVKEEPKI) shows a compositional bias: basic and acidic residues. Residues 326 to 496 (SRAPVVTVMG…LLIAEMQNLK (171 aa)) enclose the tr-type G domain. Residues 335–342 (GHVDHGKT) are G1. Residue 335–342 (GHVDHGKT) coordinates GTP. Residues 360–364 (GITQH) form a G2 region. The tract at residues 382–385 (DTPG) is G3. Residues 382–386 (DTPGH) and 436–439 (NKID) contribute to the GTP site. Residues 436–439 (NKID) are G4. The segment at 472–474 (SAL) is G5.

This sequence belongs to the TRAFAC class translation factor GTPase superfamily. Classic translation factor GTPase family. IF-2 subfamily.

The protein resides in the cytoplasm. Its function is as follows. One of the essential components for the initiation of protein synthesis. Protects formylmethionyl-tRNA from spontaneous hydrolysis and promotes its binding to the 30S ribosomal subunits. Also involved in the hydrolysis of GTP during the formation of the 70S ribosomal complex. This chain is Translation initiation factor IF-2, found in Rickettsia bellii (strain RML369-C).